The sequence spans 164 residues: B-phycoerythrin alpha chain (164 aa).

(2R,3E)-phycoerythrobilin-binding residues include cysteine 82 and cysteine 139.

Belongs to the phycobiliprotein family. As to quaternary structure, heteromer of 6 alpha, 6 beta and one gamma chain. Post-translationally, contains two covalently linked bilin chromophores.

The protein localises to the plastid. The protein resides in the chloroplast thylakoid membrane. In terms of biological role, light-harvesting photosynthetic bile pigment-protein from the phycobiliprotein complex. In Porphyridium purpureum (Red alga), this protein is B-phycoerythrin alpha chain (cpeA).